Consider the following 154-residue polypeptide: uncharacterized protein (154 aa).

Residues 1–21 (MSISSGSFAQPAAVVSSPGVT) form the signal peptide.

It belongs to the ivy family.

Its subcellular location is the periplasm. This is an uncharacterized protein from Yersinia pestis.